The chain runs to 135 residues: Crossover junction endodeoxyribonuclease Hje (135 aa).

Mg(2+) is bound by residues Glu-10, Asp-39, and Glu-52.

The protein belongs to the Holliday junction resolvase Hjc family. Hje subfamily. In terms of assembly, homodimer. It depends on Mg(2+) as a cofactor.

The enzyme catalyses Endonucleolytic cleavage at a junction such as a reciprocal single-stranded crossover between two homologous DNA duplexes (Holliday junction).. Functionally, a structure-specific endonuclease that resolves Holliday junction (HJ) intermediates during genetic recombination. Acts only on 4-way DNA junctions in a sequence non-specific manner; introduces paired nicks in opposing strands 2 bases 3' of the point of strand exchange only on continuous strands of 4-way junction DNA. Cleaves both mobile and immobile junctions. Plays a more direct role in DNA repair than Hjc. Overexpression of this protein decreases the growth rate, and leads to genomic instability, and global transcriptomic changes. The chain is Crossover junction endodeoxyribonuclease Hje from Saccharolobus islandicus (strain REY15A) (Sulfolobus islandicus).